We begin with the raw amino-acid sequence, 275 residues long: Thiazole synthase (275 aa).

Residue lysine 108 is the Schiff-base intermediate with DXP of the active site. 1-deoxy-D-xylulose 5-phosphate is bound by residues glycine 169, 196–197, and 218–219; these read AG and NT.

It belongs to the ThiG family. As to quaternary structure, homotetramer. Forms heterodimers with either ThiH or ThiS.

The protein localises to the cytoplasm. It carries out the reaction [ThiS sulfur-carrier protein]-C-terminal-Gly-aminoethanethioate + 2-iminoacetate + 1-deoxy-D-xylulose 5-phosphate = [ThiS sulfur-carrier protein]-C-terminal Gly-Gly + 2-[(2R,5Z)-2-carboxy-4-methylthiazol-5(2H)-ylidene]ethyl phosphate + 2 H2O + H(+). Its pathway is cofactor biosynthesis; thiamine diphosphate biosynthesis. Functionally, catalyzes the rearrangement of 1-deoxy-D-xylulose 5-phosphate (DXP) to produce the thiazole phosphate moiety of thiamine. Sulfur is provided by the thiocarboxylate moiety of the carrier protein ThiS. In vitro, sulfur can be provided by H(2)S. This is Thiazole synthase from Ralstonia pickettii (strain 12J).